A 94-amino-acid polypeptide reads, in one-letter code: Small ribosomal subunit protein bS6 (94 aa).

Belongs to the bacterial ribosomal protein bS6 family.

Its function is as follows. Binds together with bS18 to 16S ribosomal RNA. This Akkermansia muciniphila (strain ATCC BAA-835 / DSM 22959 / JCM 33894 / BCRC 81048 / CCUG 64013 / CIP 107961 / Muc) protein is Small ribosomal subunit protein bS6.